The following is a 239-amino-acid chain: 2,3,4,5-tetrahydropyridine-2,6-dicarboxylate N-acetyltransferase (239 aa).

This sequence belongs to the transferase hexapeptide repeat family. DapH subfamily.

The enzyme catalyses (S)-2,3,4,5-tetrahydrodipicolinate + acetyl-CoA + H2O = L-2-acetamido-6-oxoheptanedioate + CoA. Its pathway is amino-acid biosynthesis; L-lysine biosynthesis via DAP pathway; LL-2,6-diaminopimelate from (S)-tetrahydrodipicolinate (acetylase route): step 1/3. Functionally, catalyzes the transfer of an acetyl group from acetyl-CoA to tetrahydrodipicolinate. This Staphylococcus aureus (strain Newman) protein is 2,3,4,5-tetrahydropyridine-2,6-dicarboxylate N-acetyltransferase.